The primary structure comprises 964 residues: Activator of stress genes 1 (964 aa).

Positions 21–47 (CDECRKKKVKCDGQQPCIHCTVYSYEC) form a DNA-binding region, zn(2)-C6 fungal-type. Positions 104-125 (ASTIPASNNPSKPRKYKTKSTR) are disordered. At S166 the chain carries Phosphoserine; by ATM or ATR. S186 carries the post-translational modification Phosphoserine. Polar residues-rich tracts occupy residues 190 to 201 (PVLSSNSKNSTP), 209 to 225 (KSDS…DSVD), and 733 to 759 (NNTP…TNMS). Disordered regions lie at residues 190 to 225 (PVLS…DSVD), 733 to 764 (NNTP…ERDP), and 800 to 900 (NSAF…SPSY). The segment covering 800–896 (NSAFDFSSSK…NDFGIKIDNN (97 aa)) has biased composition (low complexity). S963 is modified (phosphoserine).

This sequence belongs to the ASG1 family.

It localises to the nucleus. Functionally, probable transcription factor involved in the stress response. The polypeptide is Activator of stress genes 1 (ASG1) (Saccharomyces cerevisiae (strain ATCC 204508 / S288c) (Baker's yeast)).